The primary structure comprises 158 residues: Ribosome maturation factor RimP (158 aa).

This sequence belongs to the RimP family.

It localises to the cytoplasm. In terms of biological role, required for maturation of 30S ribosomal subunits. This chain is Ribosome maturation factor RimP, found in Pseudomonas syringae pv. tomato (strain ATCC BAA-871 / DC3000).